Consider the following 860-residue polypeptide: Leucine--tRNA ligase (860 aa).

Positions 42–52 (PYPSGRLHMGH) match the 'HIGH' region motif. The short motif at 619-623 (KMSKS) is the 'KMSKS' region element. Lys-622 is a binding site for ATP.

This sequence belongs to the class-I aminoacyl-tRNA synthetase family.

It localises to the cytoplasm. The enzyme catalyses tRNA(Leu) + L-leucine + ATP = L-leucyl-tRNA(Leu) + AMP + diphosphate. This chain is Leucine--tRNA ligase, found in Escherichia coli O7:K1 (strain IAI39 / ExPEC).